Consider the following 468-residue polypeptide: Acetyl-CoA decarbonylase/synthase complex subunit gamma (468 aa).

In terms of domain architecture, 4Fe-4S spans 1–60; it reads MKINSPLEAYKYLPQTNCGECGEATCMAFASKLIDRSGKTSDCPPLIKEKKFAKKLAELD. Positions 18, 21, 26, and 43 each coordinate [4Fe-4S] cluster.

Heterodimer of delta and gamma chains. The ACDS complex is made up of alpha, epsilon, beta, gamma and delta chains with a probable stoichiometry of (alpha(2)epsilon(2))(4)-beta(8)-(gamma(1)delta(1))(8). The cofactor is corrinoid. [4Fe-4S] cluster serves as cofactor.

The enzyme catalyses 5,6,7,8-tetrahydrosarcinapterin + methyl-Co(III)-[corrinoid Fe-S protein] = 5-methyltetrahydrosarcinapterin + Co(I)-[corrinoid Fe-S protein] + H(+). Its pathway is one-carbon metabolism; methanogenesis from acetate. Its function is as follows. Part of a complex that catalyzes the reversible cleavage of acetyl-CoA, allowing growth on acetate as sole source of carbon and energy. In Methanosarcina acetivorans (strain ATCC 35395 / DSM 2834 / JCM 12185 / C2A), this protein is Acetyl-CoA decarbonylase/synthase complex subunit gamma.